Consider the following 287-residue polypeptide: Probable glucose uptake protein GlcU (287 aa).

Transmembrane regions (helical) follow at residues 7-29 (LIAL…VGGG), 34-56 (IRGT…FAKF), 58-75 (NPTV…WAFG), 114-136 (WSSM…GVAL), 156-178 (MGIL…IFGV), 183-202 (ALFF…SMNH), 209-228 (TALN…FMFY), 233-255 (VGVA…GGIF), and 267-286 (TGIW…LGNL).

This sequence belongs to the GRP transporter (TC 2.A.7.5) family.

The protein resides in the cell membrane. Its function is as follows. Involved in the uptake of glucose. In Staphylococcus aureus (strain COL), this protein is Probable glucose uptake protein GlcU (glcU).